The primary structure comprises 473 residues: Photosystem II CP43 reaction center protein (473 aa).

A propeptide spanning residues 1–14 (MKILYSLRRFYHVE) is cleaved from the precursor. Thr15 is subject to N-acetylthreonine. A Phosphothreonine modification is found at Thr15. The next 5 helical transmembrane spans lie at 69 to 93 (LFEV…PHLA), 134 to 155 (LLGP…KDRN), 178 to 200 (KALY…RKIT), 255 to 275 (KPFA…LSYS), and 291 to 312 (WFNN…ASQA). Glu367 is a binding site for [CaMn4O5] cluster. The helical transmembrane segment at 447 to 471 (RARAAAAGFEKGIDRDLEPVLYMNP) threads the bilayer.

It belongs to the PsbB/PsbC family. PsbC subfamily. In terms of assembly, PSII is composed of 1 copy each of membrane proteins PsbA, PsbB, PsbC, PsbD, PsbE, PsbF, PsbH, PsbI, PsbJ, PsbK, PsbL, PsbM, PsbT, PsbX, PsbY, PsbZ, Psb30/Ycf12, at least 3 peripheral proteins of the oxygen-evolving complex and a large number of cofactors. It forms dimeric complexes. Requires Binds multiple chlorophylls and provides some of the ligands for the Ca-4Mn-5O cluster of the oxygen-evolving complex. It may also provide a ligand for a Cl- that is required for oxygen evolution. PSII binds additional chlorophylls, carotenoids and specific lipids. as cofactor.

It is found in the plastid. The protein resides in the chloroplast thylakoid membrane. One of the components of the core complex of photosystem II (PSII). It binds chlorophyll and helps catalyze the primary light-induced photochemical processes of PSII. PSII is a light-driven water:plastoquinone oxidoreductase, using light energy to abstract electrons from H(2)O, generating O(2) and a proton gradient subsequently used for ATP formation. This Hordeum vulgare (Barley) protein is Photosystem II CP43 reaction center protein.